We begin with the raw amino-acid sequence, 187 residues long: Tetraheme c-type cytochrome CymA (187 aa).

The Cytoplasmic portion of the chain corresponds to 1–12 (MNWRALFKPSAK). A helical membrane pass occupies residues 13-33 (YSILALLVVGIVIGVVGYFAT). Residues 34-187 (QQTLHATSTD…KGVAHPYPKG (154 aa)) are Periplasmic-facing. Positions 46, 49, 64, 75, 78, 79, 97, 136, 139, 140, 173, 176, 177, and 182 each coordinate heme c.

The protein belongs to the NapC/NirT/NrfH family. In terms of assembly, homodimer. It depends on heme c as a cofactor.

Its subcellular location is the cell inner membrane. The enzyme catalyses a quinol + 2 Fe(III)-[cytochrome c](out) = a quinone + 2 Fe(II)-[cytochrome c](out) + 2 H(+)(out). Spectroscopic studies suggest that CymA requires a non-heme cofactor for quinol oxidation. Quinol dehydrogenase involved in several anaerobic electron transfer pathways. Acquires electrons from the membrane quinone pool and mediates their transfer to several periplasmic terminal reductases and redox shuttles, including the fumarate reductase FccA, the small tetraheme cytochrome (STC), the c-type cytochrome MtrA, the nitrate reductase NapA (either through NapB or directly), the nitrite reductase NrfA and probably also the DmsE subunit of dimethyl sulfoxide (DMSO) reductase. Required for growth on fumarate and on DMSO, and for the reduction of iron(III), manganese(IV), nitrite and nitrate. Not essential for growth on trimethylamine-N-oxide (TMAO). The chain is Tetraheme c-type cytochrome CymA from Shewanella oneidensis (strain ATCC 700550 / JCM 31522 / CIP 106686 / LMG 19005 / NCIMB 14063 / MR-1).